A 95-amino-acid chain; its full sequence is Antitoxin TacA1 (95 aa).

The neutralization domain stretch occupies residues 59 to 95 (FNFNDEQYEEFINLLDAPVADDPVIEKLLARKPQWDV).

This sequence belongs to the TacA antitoxin family. In terms of assembly, homodimer. Forms a complex with cognate toxin TacT1. Forms a 4:2 antitoxin:toxin complex with cognate toxin TacT1.

Its function is as follows. Antitoxin component of a type II toxin-antitoxin (TA) system. Counteracts the toxic effect of cognate toxin TacT1 (T8), but not TacT2 or TacT3. Plays a role in persister cell formation. The TacA1-TacT1 complex binds (and probably represses) its own promoter DNA but not that of tacA3-tacT3, it does not repress the tacA3-tacT3 promoter. In Salmonella typhimurium (strain 14028s / SGSC 2262), this protein is Antitoxin TacA1.